The sequence spans 433 residues: Glutamate-1-semialdehyde 2,1-aminomutase (433 aa).

K266 is modified (N6-(pyridoxal phosphate)lysine).

This sequence belongs to the class-III pyridoxal-phosphate-dependent aminotransferase family. HemL subfamily. In terms of assembly, homodimer. It depends on pyridoxal 5'-phosphate as a cofactor.

It localises to the cytoplasm. It carries out the reaction (S)-4-amino-5-oxopentanoate = 5-aminolevulinate. Its pathway is porphyrin-containing compound metabolism; protoporphyrin-IX biosynthesis; 5-aminolevulinate from L-glutamyl-tRNA(Glu): step 2/2. The chain is Glutamate-1-semialdehyde 2,1-aminomutase from Psychrobacter cryohalolentis (strain ATCC BAA-1226 / DSM 17306 / VKM B-2378 / K5).